We begin with the raw amino-acid sequence, 250 residues long: MSRRYDSRTTIFSPEGRLYQVEYAMEAIGNAGSAIGILSKDGVVLIGEKKVTSKLLQTSTSAEKMYKIDDHVACAVAGIMSDANILINTARVQAQRYTFMYQEPMPVEQLVQSLCDTKQGYTQFGGLRPFGVSFLFAGWDKHHGFQLYMSDPSGNYGGWKAAAVGANNQAAQSILKQDYKDDATREEAVELALKVLTKTMDSTSLTSEKLELAEVYLTPSKTVKYHVHSPESLTKLLVKHGVTQPAAETS.

Residues Lys40 and Lys64 each participate in a glycyl lysine isopeptide (Lys-Gly) (interchain with G-Cter in ubiquitin) cross-link.

The protein belongs to the peptidase T1A family. In terms of assembly, component of the 20S core complex of the 26S proteasome. The 26S proteasome is composed of a core protease (CP), known as the 20S proteasome, capped at one or both ends by the 19S regulatory particle (RP/PA700). The 20S proteasome core is composed of 28 subunits that are arranged in four stacked rings, resulting in a barrel-shaped structure. The two end rings are each formed by seven alpha subunits, and the two central rings are each formed by seven beta subunits. The catalytic chamber with the active sites is on the inside of the barrel. Ubiquitous low levels, higher expression in siliques and flowers.

The protein localises to the cytoplasm. It is found in the nucleus. Functionally, the proteasome is a multicatalytic proteinase complex which is characterized by its ability to cleave peptides with Arg, Phe, Tyr, Leu, and Glu adjacent to the leaving group at neutral or slightly basic pH. The proteasome has an ATP-dependent proteolytic activity. In Arabidopsis thaliana (Mouse-ear cress), this protein is Proteasome subunit alpha type-4-A (PAC1).